The chain runs to 214 residues: Cytochrome b (214 aa).

4 consecutive transmembrane segments (helical) span residues 31–51 (FGSMLLICLMIQTTTGFFLAI), 75–96 (WIMQNTHAIGASLFFICIYTHI), 111–131 (WLSGTTLLIILMATAFFGYVL), and 176–196 (FFALHFILPFAIISLSSIHIL). Positions 81 and 95 each coordinate heme b. Heme b-binding residues include His-180 and His-194. His-199 is an a ubiquinone binding site.

Belongs to the cytochrome b family. As to quaternary structure, the cytochrome bc1 complex contains 3 respiratory subunits (MT-CYB, CYC1 and UQCRFS1), 2 core proteins (UQCRC1 and UQCRC2) and probably 6 low-molecular weight proteins. Requires heme b as cofactor.

Its subcellular location is the mitochondrion inner membrane. Its function is as follows. Component of the ubiquinol-cytochrome c reductase complex (complex III or cytochrome b-c1 complex) that is part of the mitochondrial respiratory chain. The b-c1 complex mediates electron transfer from ubiquinol to cytochrome c. Contributes to the generation of a proton gradient across the mitochondrial membrane that is then used for ATP synthesis. In Lachesis muta muta (Bushmaster), this protein is Cytochrome b (MT-CYB).